The primary structure comprises 234 residues: UPF0104 membrane protein MJ1078 (234 aa).

The next 5 membrane-spanning stretches (helical) occupy residues 32 to 52 (VGTV…LLFI), 70 to 90 (IKWG…FLIV), 123 to 143 (LITL…FIFL), 164 to 184 (LTAI…LIYI), and 198 to 218 (VLIL…AIMF).

Belongs to the UPF0104 family.

The protein resides in the cell membrane. In Methanocaldococcus jannaschii (strain ATCC 43067 / DSM 2661 / JAL-1 / JCM 10045 / NBRC 100440) (Methanococcus jannaschii), this protein is UPF0104 membrane protein MJ1078.